We begin with the raw amino-acid sequence, 431 residues long: Enolase (431 aa).

Gln-162 lines the (2R)-2-phosphoglycerate pocket. The active-site Proton donor is Glu-204. Positions 241, 288, and 315 each coordinate Mg(2+). 4 residues coordinate (2R)-2-phosphoglycerate: Lys-340, Arg-369, Ser-370, and Lys-391. Lys-340 functions as the Proton acceptor in the catalytic mechanism.

The protein belongs to the enolase family. It depends on Mg(2+) as a cofactor.

It is found in the cytoplasm. It localises to the secreted. Its subcellular location is the cell surface. It catalyses the reaction (2R)-2-phosphoglycerate = phosphoenolpyruvate + H2O. It functions in the pathway carbohydrate degradation; glycolysis; pyruvate from D-glyceraldehyde 3-phosphate: step 4/5. Its function is as follows. Catalyzes the reversible conversion of 2-phosphoglycerate (2-PG) into phosphoenolpyruvate (PEP). It is essential for the degradation of carbohydrates via glycolysis. In Phocaeicola vulgatus (strain ATCC 8482 / DSM 1447 / JCM 5826 / CCUG 4940 / NBRC 14291 / NCTC 11154) (Bacteroides vulgatus), this protein is Enolase.